Consider the following 180-residue polypeptide: ATP-dependent protease subunit HslV (180 aa).

Threonine 7 is an active-site residue. 3 residues coordinate Na(+): glycine 165, cysteine 168, and threonine 171.

The protein belongs to the peptidase T1B family. HslV subfamily. A double ring-shaped homohexamer of HslV is capped on each side by a ring-shaped HslU homohexamer. The assembly of the HslU/HslV complex is dependent on binding of ATP.

It is found in the cytoplasm. The catalysed reaction is ATP-dependent cleavage of peptide bonds with broad specificity.. Allosterically activated by HslU binding. Functionally, protease subunit of a proteasome-like degradation complex believed to be a general protein degrading machinery. The chain is ATP-dependent protease subunit HslV from Bacillus cereus (strain ATCC 10987 / NRS 248).